The chain runs to 151 residues: Transcriptional repressor NrdR (151 aa).

A zinc finger spans residues 3-34 (CPFCHNDQSRVIDSRVIDSGSAIRRRRECTQC). Residues 46 to 136 (LLVVKRNGLT…VYKSFESADD (91 aa)) enclose the ATP-cone domain.

Belongs to the NrdR family. It depends on Zn(2+) as a cofactor.

Its function is as follows. Negatively regulates transcription of bacterial ribonucleotide reductase nrd genes and operons by binding to NrdR-boxes. The protein is Transcriptional repressor NrdR of Corynebacterium diphtheriae (strain ATCC 700971 / NCTC 13129 / Biotype gravis).